Consider the following 306-residue polypeptide: tRNA-cytidine(32) 2-sulfurtransferase (306 aa).

The tract at residues 1–25 (MSAVISLPDPQPRAARDPRVAEREQ) is disordered. A compositionally biased stretch (basic and acidic residues) spans 14–25 (AARDPRVAEREQ). A PP-loop motif motif is present at residues 57–62 (SGGKDS). 3 residues coordinate [4Fe-4S] cluster: cysteine 132, cysteine 135, and cysteine 223. The tract at residues 286–306 (AHAWLAGSPADADADPETPTV) is disordered. The segment covering 297-306 (ADADPETPTV) has biased composition (acidic residues).

It belongs to the TtcA family. In terms of assembly, homodimer. Requires Mg(2+) as cofactor. The cofactor is [4Fe-4S] cluster.

The protein localises to the cytoplasm. The catalysed reaction is cytidine(32) in tRNA + S-sulfanyl-L-cysteinyl-[cysteine desulfurase] + AH2 + ATP = 2-thiocytidine(32) in tRNA + L-cysteinyl-[cysteine desulfurase] + A + AMP + diphosphate + H(+). The protein operates within tRNA modification. Its function is as follows. Catalyzes the ATP-dependent 2-thiolation of cytidine in position 32 of tRNA, to form 2-thiocytidine (s(2)C32). The sulfur atoms are provided by the cysteine/cysteine desulfurase (IscS) system. This Stenotrophomonas maltophilia (strain K279a) protein is tRNA-cytidine(32) 2-sulfurtransferase.